The following is a 61-amino-acid chain: Cytotoxin 1 (61 aa).

Disulfide bonds link Cys-3/Cys-22, Cys-15/Cys-39, Cys-43/Cys-54, and Cys-55/Cys-60.

This sequence belongs to the three-finger toxin family. Short-chain subfamily. Type IB cytotoxin sub-subfamily. Expressed by the venom gland.

The protein localises to the secreted. In terms of biological role, this protein lyses red blood cells and has cardiotoxic and hypotensive activities. The chain is Cytotoxin 1 from Hemachatus haemachatus (Rinkhals).